The chain runs to 338 residues: Probable tRNA pseudouridine synthase B (338 aa).

Asp-78 acts as the Nucleophile in catalysis. Positions 245 to 320 constitute a PUA domain; it reads LPKIILRDSA…IAASPIRVLM (76 aa).

The protein belongs to the pseudouridine synthase TruB family. Type 2 subfamily.

The catalysed reaction is uridine(55) in tRNA = pseudouridine(55) in tRNA. Could be responsible for synthesis of pseudouridine from uracil-55 in the psi GC loop of transfer RNAs. The protein is Probable tRNA pseudouridine synthase B of Methanosarcina acetivorans (strain ATCC 35395 / DSM 2834 / JCM 12185 / C2A).